The sequence spans 255 residues: MALPDFSMRQLLEAGVHFGHQTHRWNPKMKPYIFGDRNNIHIIDLAQTVPMLSRALQVVSDTVARGGRVLFVGTKRQASEIIADSAKRSAQYYVNSRWLGGMMTNWKTISNSIQRLRKLDEILNGEAQGFTKKERLNLEREREKLDKALGGIRDMGGTPDLMFIIDTNKEKIAIDEAKRLGIPVVAIIDSNCDPDLIDYPIPGNDDASRAIALYCELISRAAIDGIARQQSSSGRDLGASSEVPVEPALEEAAEG.

The tract at residues 230-255 (QSSSGRDLGASSEVPVEPALEEAAEG) is disordered.

The protein belongs to the universal ribosomal protein uS2 family.

In Rhizobium leguminosarum bv. trifolii (strain WSM2304), this protein is Small ribosomal subunit protein uS2.